The primary structure comprises 174 residues: Chorion class CB protein M5H4 (174 aa).

The signal sequence occupies residues M1–S20. The tract at residues Q21–A71 is left arm. Residues S72 to E142 are central domain. Residues A143–Y174 form a right arm region.

The protein belongs to the chorion protein family.

Functionally, this protein is one of many from the eggshell of the silk moth. The protein is Chorion class CB protein M5H4 of Bombyx mori (Silk moth).